A 985-amino-acid polypeptide reads, in one-letter code: Lateral signaling target protein 2 homolog (985 aa).

4 disordered regions span residues 310 to 453, 498 to 520, 533 to 640, and 747 to 892; these read PLGS…ETDE, EYGA…PSTS, LRLP…SSLS, and DNVF…TTTA. Composition is skewed to low complexity over residues 327-348, 384-393, and 401-422; these read HPTT…TNTH, SLSPNSTPTA, and PSHS…PADW. Positions 423–453 are enriched in acidic residues; sequence SDGDDEDEEDDDDDIEVEEEELDSTDDETDE. Phosphoserine occurs at positions 537 and 538. Basic residues-rich tracts occupy residues 563-589 and 596-607; these read VYRH…HHQH and HPHRTTRSGRKR. Composition is skewed to low complexity over residues 629-640 and 761-770; these read ASGDTSAASSLS and NGNQANASAQ. A compositionally biased stretch (polar residues) spans 776 to 785; sequence GSIQRNNTVD. Ser-808 bears the Phosphoserine mark. A compositionally biased stretch (low complexity) spans 812 to 866; that stretch reads QESASTSTSSSQLHQEQQQLQIQVQRQRNNSVGSNTPSSASSTSSSSEQNSPVSA. Positions 875-885 are enriched in polar residues; it reads QSNNETQMPSS. The FYVE-type zinc finger occupies 904–964; sequence DGKAPRCMSC…VCRECYVREV (61 aa). Residues Cys-910, Cys-913, Cys-926, Cys-929, Cys-934, Cys-937, Cys-956, and Cys-959 each contribute to the Zn(2+) site.

It belongs to the lst-2 family.

In terms of biological role, negative regulator of epidermal growth factor receptor (EGFR) signaling. This chain is Lateral signaling target protein 2 homolog, found in Drosophila ananassae (Fruit fly).